Here is a 62-residue protein sequence, read N- to C-terminus: Small ribosomal subunit protein uS14 (62 aa).

Zn(2+) contacts are provided by Cys-25, Cys-28, Cys-41, and Cys-44.

Belongs to the universal ribosomal protein uS14 family. Zinc-binding uS14 subfamily. In terms of assembly, part of the 30S ribosomal subunit. Contacts proteins S3 and S10. Requires Zn(2+) as cofactor.

Binds 16S rRNA, required for the assembly of 30S particles and may also be responsible for determining the conformation of the 16S rRNA at the A site. The sequence is that of Small ribosomal subunit protein uS14 from Aquifex aeolicus (strain VF5).